Here is a 147-residue protein sequence, read N- to C-terminus: NADH-quinone oxidoreductase subunit A (147 aa).

Helical transmembrane passes span 16-36 (FAIF…GGWF), 68-88 (FYLV…LFAW), and 97-117 (WVGF…LVYL).

Belongs to the complex I subunit 3 family. As to quaternary structure, NDH-1 is composed of 13 different subunits. Subunits NuoA, H, J, K, L, M, N constitute the membrane sector of the complex.

It is found in the cell inner membrane. The enzyme catalyses a quinone + NADH + 5 H(+)(in) = a quinol + NAD(+) + 4 H(+)(out). Functionally, NDH-1 shuttles electrons from NADH, via FMN and iron-sulfur (Fe-S) centers, to quinones in the respiratory chain. The immediate electron acceptor for the enzyme in this species is believed to be ubiquinone. Couples the redox reaction to proton translocation (for every two electrons transferred, four hydrogen ions are translocated across the cytoplasmic membrane), and thus conserves the redox energy in a proton gradient. This chain is NADH-quinone oxidoreductase subunit A, found in Salmonella paratyphi A (strain ATCC 9150 / SARB42).